The following is a 193-amino-acid chain: Ion-translocating oxidoreductase complex subunit A (193 aa).

6 helical membrane-spanning segments follow: residues 5–25, 39–59, 63–83, 102–122, 134–154, and 171–191; these read LLLFVGTVLVNNFVLVKFLGL, MGMGLATTFVMTLASICAWLI, ILIPLNLIYLRTLAFILVIAV, LLGIFLPLITTNCAVLGVALL, ALYGFSAAVGFSLVMVLFAAI, and AIALITAGLMSLAFMGFNGLV.

Belongs to the NqrDE/RnfAE family. In terms of assembly, the complex is composed of six subunits: RsxA, RsxB, RsxC, RsxD, RsxE and RsxG.

It localises to the cell inner membrane. In terms of biological role, part of a membrane-bound complex that couples electron transfer with translocation of ions across the membrane. Required to maintain the reduced state of SoxR. This chain is Ion-translocating oxidoreductase complex subunit A, found in Shigella sonnei (strain Ss046).